The sequence spans 161 residues: Phosphopantetheine adenylyltransferase (161 aa).

Threonine 10 is a substrate binding site. ATP-binding positions include 10–11 (TF) and histidine 18. Positions 42, 75, and 89 each coordinate substrate. ATP-binding positions include 90–92 (GLR), glutamate 100, and 125–131 (YSFLSSS).

The protein belongs to the bacterial CoaD family. As to quaternary structure, homohexamer. It depends on Mg(2+) as a cofactor.

It localises to the cytoplasm. The enzyme catalyses (R)-4'-phosphopantetheine + ATP + H(+) = 3'-dephospho-CoA + diphosphate. Its pathway is cofactor biosynthesis; coenzyme A biosynthesis; CoA from (R)-pantothenate: step 4/5. In terms of biological role, reversibly transfers an adenylyl group from ATP to 4'-phosphopantetheine, yielding dephospho-CoA (dPCoA) and pyrophosphate. The chain is Phosphopantetheine adenylyltransferase from Thermodesulfovibrio yellowstonii (strain ATCC 51303 / DSM 11347 / YP87).